Reading from the N-terminus, the 151-residue chain is Conidium-specific protein (151 aa).

The disordered stretch occupies residues 1-72 (MAKPHCSSRS…FSGDPDSEVE (72 aa)). Residues 48 to 60 (RKDNSADKGDTLR) are compositionally biased toward basic and acidic residues.

In Emericella nidulans (strain FGSC A4 / ATCC 38163 / CBS 112.46 / NRRL 194 / M139) (Aspergillus nidulans), this protein is Conidium-specific protein (SpoC1-C1D).